A 683-amino-acid polypeptide reads, in one-letter code: Receptor-like serine/threonine-protein kinase At2g45590 (683 aa).

The disordered stretch occupies residues 1 to 21 (MPSRLSPPDIPPLQPTPTVSD). The Extracellular portion of the chain corresponds to 1 to 30 (MPSRLSPPDIPPLQPTPTVSDGHHRFQTLP). Residues 31–51 (LIIAGSLTLTGVLLILVTLLI) traverse the membrane as a helical segment. Residues 52–683 (YRRLYRNRTA…FPFKSRKKAR (632 aa)) lie on the Cytoplasmic side of the membrane. The Protein kinase domain maps to 92 to 664 (FSESTHLGHG…GVSEPPHLPF (573 aa)). Residues 98-106 (LGHGGFGSV) and Lys-121 contribute to the ATP site. Catalysis depends on Asp-223, which acts as the Proton acceptor. The tract at residues 406–436 (ERPSNNKEWINNGDGSSSVSKKKKKEKKRKP) is disordered. Residues 411–424 (NKEWINNGDGSSSV) are compositionally biased toward polar residues. Positions 425–436 (SKKKKKEKKRKP) are enriched in basic residues.

Belongs to the protein kinase superfamily. Ser/Thr protein kinase family.

The protein localises to the cell membrane. The catalysed reaction is L-seryl-[protein] + ATP = O-phospho-L-seryl-[protein] + ADP + H(+). The enzyme catalyses L-threonyl-[protein] + ATP = O-phospho-L-threonyl-[protein] + ADP + H(+). This chain is Receptor-like serine/threonine-protein kinase At2g45590, found in Arabidopsis thaliana (Mouse-ear cress).